The chain runs to 772 residues: Acetamidase regulatory protein (772 aa).

Polar residues predominate over residues 1 to 16; that stretch reads MSSTAQKNSLSPTGNG. A disordered region spans residues 1–23; it reads MSSTAQKNSLSPTGNGVTKRKSG. Residues 26 to 59 constitute a DNA-binding region (zn(2)-C6 fungal-type); that stretch reads ACVHCHRRKVRCDARIVGLPCSNCRSSGKTDCRI. Disordered stretches follow at residues 78 to 99, 114 to 148, and 627 to 690; these read RCRP…TISE, AAAP…QECH, and ATSE…QTAV. Residues 114 to 123 show a composition bias toward low complexity; it reads AAAPPASVAP. 2 stretches are compositionally biased toward polar residues: residues 124 to 144 and 634 to 658; these read NVQS…SPQA and PFSS…QHSS. Over residues 671 to 686 the composition is skewed to low complexity; that stretch reads LLPSYDSPTPDSTSLP.

It localises to the nucleus. Its function is as follows. Positively regulates the expression of genes involved in the catabolism of certain amides, omega amino acids, and lactams. The sequence is that of Acetamidase regulatory protein (amdR) from Aspergillus fumigatus (strain ATCC MYA-4609 / CBS 101355 / FGSC A1100 / Af293) (Neosartorya fumigata).